The following is a 73-amino-acid chain: Large ribosomal subunit protein bL31 (73 aa).

This sequence belongs to the bacterial ribosomal protein bL31 family. Type A subfamily. Part of the 50S ribosomal subunit.

Functionally, binds the 23S rRNA. The polypeptide is Large ribosomal subunit protein bL31 (Cereibacter sphaeroides (strain ATCC 17025 / ATH 2.4.3) (Rhodobacter sphaeroides)).